A 1697-amino-acid polypeptide reads, in one-letter code: SAC3 family protein B (1697 aa).

Disordered stretches follow at residues 54-134, 167-280, 306-413, and 491-512; these read PPAS…QPGG, QRPN…SRSN, EATR…EQAR, and ESERGERERKGDLDHYERVDGD. Positions 120-134 are enriched in low complexity; it reads QNPSPSSGQPYQPGG. Residues 178-192 show a composition bias toward basic and acidic residues; that stretch reads DGSRNFLKDHGEHSR. Polar residues predominate over residues 193 to 202; that stretch reads ATSPPATSHI. A compositionally biased stretch (basic and acidic residues) spans 215–227; the sequence is RSQDSKRKSRSDI. Composition is skewed to polar residues over residues 233-243, 257-280, and 335-380; these read MGFSRRNQSPV, PLSSRTWMRSPSSAENNPVRSRSN, and RFST…SPAT. In terms of domain architecture, PCI spans 625–813; that stretch reads NIEQMNKTSV…KCSKLVHMKK (189 aa).

This sequence belongs to the SAC3 family. Interacts with SAC3A, EER5 and CML19. Interacts with UCH1 and UCH2.

It localises to the nucleus. Functionally, component of the TREX-2 complex (transcription and export complex 2), a muliprotein complex that functions in docking export-competent ribonucleoprotein particles (mRNPs) to the nuclear entrance of the nuclear pore complex (nuclear basket). TREX-2 participates in mRNA export and accurate chromatin positioning in the nucleus by tethering genes to the nuclear periphery. In Arabidopsis thaliana (Mouse-ear cress), this protein is SAC3 family protein B.